We begin with the raw amino-acid sequence, 292 residues long: Elongation factor Ts (292 aa).

An involved in Mg(2+) ion dislocation from EF-Tu region spans residues 80–83 (TDFV).

Belongs to the EF-Ts family.

Its subcellular location is the cytoplasm. Its function is as follows. Associates with the EF-Tu.GDP complex and induces the exchange of GDP to GTP. It remains bound to the aminoacyl-tRNA.EF-Tu.GTP complex up to the GTP hydrolysis stage on the ribosome. This is Elongation factor Ts from Oenococcus oeni (strain ATCC BAA-331 / PSU-1).